We begin with the raw amino-acid sequence, 264 residues long: Thymidylate synthase (264 aa).

DUMP is bound at residue R21. H51 provides a ligand contact to (6R)-5,10-methylene-5,6,7,8-tetrahydrofolate. 126–127 (RR) lines the dUMP pocket. C146 (nucleophile) is an active-site residue. Residues 166 to 169 (RSAD), N177, and 207 to 209 (HLY) contribute to the dUMP site. (6R)-5,10-methylene-5,6,7,8-tetrahydrofolate is bound at residue D169. A263 is a (6R)-5,10-methylene-5,6,7,8-tetrahydrofolate binding site.

Belongs to the thymidylate synthase family. Bacterial-type ThyA subfamily. Homodimer.

Its subcellular location is the cytoplasm. The enzyme catalyses dUMP + (6R)-5,10-methylene-5,6,7,8-tetrahydrofolate = 7,8-dihydrofolate + dTMP. It functions in the pathway pyrimidine metabolism; dTTP biosynthesis. Its function is as follows. Catalyzes the reductive methylation of 2'-deoxyuridine-5'-monophosphate (dUMP) to 2'-deoxythymidine-5'-monophosphate (dTMP) while utilizing 5,10-methylenetetrahydrofolate (mTHF) as the methyl donor and reductant in the reaction, yielding dihydrofolate (DHF) as a by-product. This enzymatic reaction provides an intracellular de novo source of dTMP, an essential precursor for DNA biosynthesis. This is Thymidylate synthase from Hyphomonas neptunium (strain ATCC 15444).